The primary structure comprises 715 residues: ATP-dependent DNA helicase Hel308 (715 aa).

A Q motif motif is present at residues 8–36 (MPIEDLKLPSNVIEIIKKRGIKKLNPPQT). ATP contacts are provided by residues Q35 and 53–60 (SPTGSGKT). Positions 40–203 (KKGLLEGNRL…WLGAEPVATN (164 aa)) constitute a Helicase ATP-binding domain. The DEAH box signature appears at 152–155 (DELH). Residues 236-442 (HGDDAIIAYT…ERAFYTFLLG (207 aa)) form the Helicase C-terminal domain.

The protein belongs to the helicase family. Hel308 subfamily. Monomer.

It carries out the reaction Couples ATP hydrolysis with the unwinding of duplex DNA by translocating in the 3'-5' direction.. It catalyses the reaction ATP + H2O = ADP + phosphate + H(+). In terms of biological role, DNA-dependent ATPase and 3'-5' DNA helicase that may be involved in repair of stalled replication forks. A low processivity 3'-5' helicase. Unwinds short dsDNA substrates with 3'-overhangs (25 bp dsDNA with 25 base overhang), less active on longer dsDNA substrates. Also unwinds the lagging strand of a stalled replication fork (but the leading strand was not tested). Binds ssDNA, but dsDNA about 35-fold less well. Able to displace streptavidin from biotinylated ssDNA, which is partially inhibited by DNA-binding proteins, suggesting it may play a role in stripping proteins from stalled replication forks. This chain is ATP-dependent DNA helicase Hel308, found in Saccharolobus solfataricus (strain 98/2) (Sulfolobus solfataricus).